Here is a 124-residue protein sequence, read N- to C-terminus: MSGSSNQFTPGKLVPGAINFAEGEIVMNEGREAKVISIKNTGDRPIQVGSHFHLFETNSALVFFDEKGNEDKERKVAYGRRFDIPSGTAIRFEPGDKKEVSVIDLVGTREVWGVNGLVNGKLKK.

It belongs to the urease beta subunit family. Heterotrimer of UreA (gamma), UreB (beta) and UreC (alpha) subunits. Three heterotrimers associate to form the active enzyme.

The protein resides in the cytoplasm. It catalyses the reaction urea + 2 H2O + H(+) = hydrogencarbonate + 2 NH4(+). It functions in the pathway nitrogen metabolism; urea degradation; CO(2) and NH(3) from urea (urease route): step 1/1. This chain is Urease subunit beta, found in Ureaplasma urealyticum serovar 10 (strain ATCC 33699 / Western).